The following is a 241-amino-acid chain: UDP-2,3-diacylglucosamine hydrolase (241 aa).

Asp8, His10, Asp41, Asn79, and His114 together coordinate Mn(2+). Position 79–80 (79–80) interacts with substrate; it reads NR. Asp122, Ser160, Lys167, and His195 together coordinate substrate. Mn(2+) is bound by residues His195 and His197.

Belongs to the LpxH family. Mn(2+) serves as cofactor.

The protein localises to the cell inner membrane. The enzyme catalyses UDP-2-N,3-O-bis[(3R)-3-hydroxytetradecanoyl]-alpha-D-glucosamine + H2O = 2-N,3-O-bis[(3R)-3-hydroxytetradecanoyl]-alpha-D-glucosaminyl 1-phosphate + UMP + 2 H(+). It participates in glycolipid biosynthesis; lipid IV(A) biosynthesis; lipid IV(A) from (3R)-3-hydroxytetradecanoyl-[acyl-carrier-protein] and UDP-N-acetyl-alpha-D-glucosamine: step 4/6. In terms of biological role, hydrolyzes the pyrophosphate bond of UDP-2,3-diacylglucosamine to yield 2,3-diacylglucosamine 1-phosphate (lipid X) and UMP by catalyzing the attack of water at the alpha-P atom. Involved in the biosynthesis of lipid A, a phosphorylated glycolipid that anchors the lipopolysaccharide to the outer membrane of the cell. The protein is UDP-2,3-diacylglucosamine hydrolase of Azotobacter vinelandii (strain DJ / ATCC BAA-1303).